Reading from the N-terminus, the 652-residue chain is p-hydroxybenzoic acid efflux pump subunit AaeB (652 aa).

A run of 11 helical transmembrane segments spans residues 8 to 28 (FPIK…HFNL), 34 to 54 (AVMT…GDPF), 64 to 84 (LRII…IATI), 88 to 108 (ALMM…SSLI), 118 to 138 (LAGY…SVLL), 149 to 169 (EIII…PRSV), 367 to 387 (LFWL…LAVI), 404 to 424 (FLYG…VIMP), 429 to 449 (SMLL…ILIQ), 453 to 473 (IGTL…NPMT), and 480 to 500 (LDNA…ILLI).

It belongs to the aromatic acid exporter ArAE (TC 2.A.85) family.

Its subcellular location is the cell inner membrane. Forms an efflux pump with AaeA. Could function as a metabolic relief valve, allowing to eliminate certain compounds when they accumulate to high levels in the cell. This Erwinia billingiae (strain Eb661) protein is p-hydroxybenzoic acid efflux pump subunit AaeB.